A 443-amino-acid polypeptide reads, in one-letter code: Thymidine phosphorylase (443 aa).

It belongs to the thymidine/pyrimidine-nucleoside phosphorylase family. Homodimer.

The catalysed reaction is thymidine + phosphate = 2-deoxy-alpha-D-ribose 1-phosphate + thymine. The protein operates within pyrimidine metabolism; dTMP biosynthesis via salvage pathway; dTMP from thymine: step 1/2. The enzymes which catalyze the reversible phosphorolysis of pyrimidine nucleosides are involved in the degradation of these compounds and in their utilization as carbon and energy sources, or in the rescue of pyrimidine bases for nucleotide synthesis. In Shewanella frigidimarina (strain NCIMB 400), this protein is Thymidine phosphorylase.